A 401-amino-acid polypeptide reads, in one-letter code: Elongation factor Tu (401 aa).

One can recognise a tr-type G domain in the interval 10-209 (KPHINVGTIG…AVDEYIPTPQ (200 aa)). The interval 19-26 (GHVDHGKT) is G1. 19–26 (GHVDHGKT) contacts GTP. Thr26 is a binding site for Mg(2+). Residues 60–64 (GITIA) form a G2 region. Positions 81–84 (DCPG) are G3. Residues 81–85 (DCPGH) and 136–139 (NKVD) contribute to the GTP site. Residues 136–139 (NKVD) are G4. Residues 174-176 (SAR) are G5.

This sequence belongs to the TRAFAC class translation factor GTPase superfamily. Classic translation factor GTPase family. EF-Tu/EF-1A subfamily. In terms of assembly, monomer.

It localises to the cytoplasm. It catalyses the reaction GTP + H2O = GDP + phosphate + H(+). In terms of biological role, GTP hydrolase that promotes the GTP-dependent binding of aminoacyl-tRNA to the A-site of ribosomes during protein biosynthesis. This Chloroflexus aurantiacus (strain ATCC 29366 / DSM 635 / J-10-fl) protein is Elongation factor Tu.